Here is a 353-residue protein sequence, read N- to C-terminus: N-acetyl-gamma-glutamyl-phosphate reductase (353 aa).

Cysteine 155 is a catalytic residue.

It belongs to the NAGSA dehydrogenase family. Type 1 subfamily.

It is found in the cytoplasm. It catalyses the reaction N-acetyl-L-glutamate 5-semialdehyde + phosphate + NADP(+) = N-acetyl-L-glutamyl 5-phosphate + NADPH + H(+). It functions in the pathway amino-acid biosynthesis; L-arginine biosynthesis; N(2)-acetyl-L-ornithine from L-glutamate: step 3/4. Catalyzes the NADPH-dependent reduction of N-acetyl-5-glutamyl phosphate to yield N-acetyl-L-glutamate 5-semialdehyde. The protein is N-acetyl-gamma-glutamyl-phosphate reductase of Microcystis aeruginosa (strain NIES-843 / IAM M-2473).